The following is a 485-amino-acid chain: MGPVMPPSKKPESPGISVSSGLSQCYRGSSFSKALQEDDDLDFSLPDIRLEEGAMEDEELTNLNWLHESKNLLKSFGDSVLRSVSPVQDLDDDTPPSPAHSDMPYDARQNPNCKPPYSFSCLIFMAIEDSPTKRLPVKDIYNWILEHFPYFANAPTGWKNSVRHNLSLNKCFKKVDKERSQSIGKGSLWCIDPEYRQNLIQALKKTPYHSHSNVFNTPPASPQAYQSTSGPPIWPGSTFFKRNGALLQDPDIDAASAMMLLNTPPEIQAGFPPGVIQNGARVLSRGLFPGVRPLPITPIGMTAAVRNGLTSCRMRTESEPSCGSPVVSGDPKEDHNYSSAKSSHARSTSPASDCVSSSSADDHYEFATKGGQEGSEGSFQSHESHSETEEDDRKCSPKEAKDALGDSGYASQHKKRQHFAKARKVPSDTLPLKKRRTEKPPESDDEEMKEAAGSLLHLAGIRSCLNNITNRTAKGQKEQKETTKN.

The tract at residues 1–21 (MGPVMPPSKKPESPGISVSSG) is disordered. Residues S83, S85, and S97 each carry the phosphoserine modification. The interval 86 to 108 (PVQDLDDDTPPSPAHSDMPYDAR) is disordered. The segment at residues 114 to 210 (KPPYSFSCLI…QALKKTPYHS (97 aa)) is a DNA-binding region (fork-head). The tract at residues 315 to 454 (RTESEPSCGS…DEEMKEAAGS (140 aa)) is disordered. The span at 338–359 (SSAKSSHARSTSPASDCVSSSS) shows a compositional bias: low complexity. The segment covering 382–404 (HESHSETEEDDRKCSPKEAKDAL) has biased composition (basic and acidic residues). Basic residues predominate over residues 412-424 (QHKKRQHFAKARK). Phosphoserine is present on S443.

In terms of assembly, interacts through its C-terminus with the C-terminus of SNW1/SKIP.

The protein resides in the nucleus. In terms of biological role, acts as a transcriptional repressor. May be involved in DNA damage-inducible cell cycle arrests (checkpoints). This chain is Forkhead box protein N3 (FOXN3), found in Sus scrofa (Pig).